Reading from the N-terminus, the 441-residue chain is MGAVLSIPLALASSLSGVVGIASSFLVTSVLSLTNSIQSNVGAVISYAVLYFVNSLLSWCMLSSWFNSKLSKLSAGYLQFDCQNDGKCYSVIAVHRLSFTLVMFHLFLAFILSLCNTRSRVAIKIQNGLWPFKIVLWFVLGIFSFFIPTKFLSFWGNIISVMGSALFIVYGLMLLVDFAHTWAERCVDRVLTSDSSSSKFYLIGSTVGMYVVGLVLTILTYVFFCASSCSFNQAINTINLLLCIAVSCLSVHPTIQEYNPRSGLAQSSMVMCYTCYLILSALANRPDEGQCNPWGNSASGTREFSKVIGAAFTFFTILYSAVRAASSRESDDSYSYLYADSHDMGVSTPLEDGSSEEDKHQSDYNFIWFHIVFVLAAFYTASLLTNWNTTSVYENQKNDVFVRIGFSYAAVWVKIITSWVCHGLYVWSCLAPVFFPYRFMI.

The next 11 helical transmembrane spans lie at 1–21, 41–61, 97–117, 128–148, 158–178, 206–226, 235–255, 263–283, 307–327, 364–384, and 415–435; these read MGAVLSIPLALASSLSGVVGI, VGAVISYAVLYFVNSLLSWCM, LSFTLVMFHLFLAFILSLCNT, GLWPFKIVLWFVLGIFSFFIP, IISVMGSALFIVYGLMLLVDF, TVGMYVVGLVLTILTYVFFCA, INTINLLLCIAVSCLSVHPTI, GLAQSSMVMCYTCYLILSALA, VIGAAFTFFTILYSAVRAASS, YNFIWFHIVFVLAAFYTASLL, and IITSWVCHGLYVWSCLAPVFF.

This sequence belongs to the TDE1 family.

Its subcellular location is the membrane. This chain is Membrane protein PB1A10.07c, found in Schizosaccharomyces pombe (strain 972 / ATCC 24843) (Fission yeast).